A 296-amino-acid polypeptide reads, in one-letter code: Probable endonuclease 4 (296 aa).

Zn(2+) is bound by residues His-68, His-109, Glu-144, Asp-178, His-181, His-213, Asp-226, His-228, and Glu-258.

It belongs to the AP endonuclease 2 family. Zn(2+) is required as a cofactor.

It catalyses the reaction Endonucleolytic cleavage to 5'-phosphooligonucleotide end-products.. Endonuclease IV plays a role in DNA repair. It cleaves phosphodiester bonds at apurinic or apyrimidinic (AP) sites, generating a 3'-hydroxyl group and a 5'-terminal sugar phosphate. The protein is Probable endonuclease 4 of Staphylococcus saprophyticus subsp. saprophyticus (strain ATCC 15305 / DSM 20229 / NCIMB 8711 / NCTC 7292 / S-41).